A 59-amino-acid polypeptide reads, in one-letter code: Conorfamide-Ep1 (59 aa).

Positions 1-19 are cleaved as a signal peptide; it reads MSGCGFLLLALLLLVTVEA. Positions 20 to 25 are excised as a propeptide; it reads TKMEKK. Isoleucine amide is present on Ile-43. Positions 45–59 are excised as a propeptide; that stretch reads RRDMQSPLLSERLRF.

The protein belongs to the FARP (FMRFamide related peptide) family. In terms of tissue distribution, expressed by the venom duct.

Its subcellular location is the secreted. Its function is as follows. Neurotoxin that is active on vertebrates. When tested at high doses (10 uM), the toxin affects all zebrafish and mouse DRG neurons in culture, which could be an indication of an effect on a widely expressed receptor or ion channel found in both species. At low doses (1 uM), the effects of the toxin are confined to a specific subpopulation of zebrafish and mouse DRG neurons. In vivo, it induces long-lasting dramatic alterations in the locomotor behavior of zebrafish larvae. It rapidly induces hypoactivity and death of larvae at high doses and it causes hyperactivity at lower doses. In zebrafish adults, intramuscular injection causes the decrease of the movements and visited spaces. In mice, intracranial injection causes lethargy and prolonges sleeping phases and reduced movement. This chain is Conorfamide-Ep1, found in Conus episcopatus (Bishop's cone).